Here is a 133-residue protein sequence, read N- to C-terminus: Serine/threonine-protein kinase RsbT (133 aa).

It catalyses the reaction L-seryl-[protein] + ATP = O-phospho-L-seryl-[protein] + ADP + H(+). It carries out the reaction L-threonyl-[protein] + ATP = O-phospho-L-threonyl-[protein] + ADP + H(+). In terms of biological role, provides the crucial link between the upstream module (communication of environmental stress) and the downstream module (integration of the environmental signals with signals of energy stress) that compose the signal transduction pathway controlling the sigma-B factor. Phosphorylates and inactivates its specific antagonist protein RsbS thanks to its serine kinase activity. Upon phosphorylation of RsbS, RsbT is released to stimulate RsbU, a PP2C phosphatase, thereby initiating the signaling cascade that ultimately activates sigma-B. The activity of the RsbU phosphatase may be stimulated by a long-lived interaction with RsbT and the serine kinase function of RsbT is not required to directly modify RsbU. Also phosphorylates RsbR thanks to its threonine kinase activity, preventing it to phosphorylate RsbT. The sequence is that of Serine/threonine-protein kinase RsbT (rsbT) from Bacillus subtilis (strain 168).